The primary structure comprises 97 residues: MKQTVLLLFTALFLSGCSVASADDSVPRFTEEGKYIGSADPHTIAVSLNGEETMIQVPKDKRDECESLPDQTHVLVKYTKKDNGTLQLEDIQLRKNS.

A signal peptide spans 1-16 (MKQTVLLLFTALFLSG). The N-palmitoyl cysteine moiety is linked to residue cysteine 17. Cysteine 17 is lipidated: S-diacylglycerol cysteine.

The protein localises to the cell membrane. This is an uncharacterized protein from Bacillus subtilis (strain 168).